A 238-amino-acid polypeptide reads, in one-letter code: Orotidine 5'-phosphate decarboxylase (238 aa).

Substrate contacts are provided by residues Asp10, Lys32, 59 to 68 (DLKLHDIPNT), Thr122, Arg184, Gln193, Gly213, and Arg214. The active-site Proton donor is Lys61.

It belongs to the OMP decarboxylase family. Type 1 subfamily. In terms of assembly, homodimer.

It carries out the reaction orotidine 5'-phosphate + H(+) = UMP + CO2. Its pathway is pyrimidine metabolism; UMP biosynthesis via de novo pathway; UMP from orotate: step 2/2. In terms of biological role, catalyzes the decarboxylation of orotidine 5'-monophosphate (OMP) to uridine 5'-monophosphate (UMP). The sequence is that of Orotidine 5'-phosphate decarboxylase from Bacillus anthracis (strain A0248).